Consider the following 370-residue polypeptide: tRNA 2-selenouridine synthase (370 aa).

The Rhodanese domain maps to 12 to 136 (FLDDVPMMDM…MRTFLLETTQ (125 aa)). The active-site S-selanylcysteine intermediate is the C95.

It belongs to the SelU family. In terms of assembly, monomer.

The catalysed reaction is 5-methylaminomethyl-2-thiouridine(34) in tRNA + selenophosphate + (2E)-geranyl diphosphate + H2O + H(+) = 5-methylaminomethyl-2-selenouridine(34) in tRNA + (2E)-thiogeraniol + phosphate + diphosphate. It catalyses the reaction 5-methylaminomethyl-2-thiouridine(34) in tRNA + (2E)-geranyl diphosphate = 5-methylaminomethyl-S-(2E)-geranyl-thiouridine(34) in tRNA + diphosphate. It carries out the reaction 5-methylaminomethyl-S-(2E)-geranyl-thiouridine(34) in tRNA + selenophosphate + H(+) = 5-methylaminomethyl-2-(Se-phospho)selenouridine(34) in tRNA + (2E)-thiogeraniol. The enzyme catalyses 5-methylaminomethyl-2-(Se-phospho)selenouridine(34) in tRNA + H2O = 5-methylaminomethyl-2-selenouridine(34) in tRNA + phosphate. Involved in the post-transcriptional modification of the uridine at the wobble position (U34) of tRNA(Lys), tRNA(Glu) and tRNA(Gln). Catalyzes the conversion of 2-thiouridine (S2U-RNA) to 2-selenouridine (Se2U-RNA). Acts in a two-step process involving geranylation of 2-thiouridine (S2U) to S-geranyl-2-thiouridine (geS2U) and subsequent selenation of the latter derivative to 2-selenouridine (Se2U) in the tRNA chain. The sequence is that of tRNA 2-selenouridine synthase from Pseudomonas putida (strain GB-1).